A 196-amino-acid polypeptide reads, in one-letter code: Cilia- and flagella-associated protein 107 (196 aa).

Mn regions lie at residues 46 to 61 (TPQT…FPGH) and 96 to 108 (ISTY…RHNY). Residues 168–196 (YPRPPAGAMSRREHAIPVPPPRLQPVPHF) are disordered. The segment covering 184-196 (PVPPPRLQPVPHF) has biased composition (pro residues).

As to quaternary structure, microtubule inner protein component of sperm flagellar doublet microtubules. As to expression, expressed in trachea multiciliated cells.

The protein localises to the cytoplasm. It localises to the cytoskeleton. Its subcellular location is the cilium axoneme. It is found in the flagellum axoneme. Its function is as follows. Microtubule inner protein (MIP) part of the dynein-decorated doublet microtubules (DMTs) in cilia axoneme, which is required for motile cilia beating. This chain is Cilia- and flagella-associated protein 107, found in Bos taurus (Bovine).